The chain runs to 91 residues: Probable Fe(2+)-trafficking protein (91 aa).

The protein belongs to the Fe(2+)-trafficking protein family. In terms of assembly, monomer.

Its function is as follows. Could be a mediator in iron transactions between iron acquisition and iron-requiring processes, such as synthesis and/or repair of Fe-S clusters in biosynthetic enzymes. The polypeptide is Probable Fe(2+)-trafficking protein (Salmonella agona (strain SL483)).